Consider the following 553-residue polypeptide: Protein TIC 55, chloroplastic (553 aa).

The transit peptide at 1–60 (MALALASANSFLLPTKTHFALHVSPPPSKKTLLCTNPSSNFSFNKALSSRRRKQAWCVAA) directs the protein to the chloroplast. The Stromal portion of the chain corresponds to 61–492 (AADVKDATLL…GCSSAIKAFQ (432 aa)). One can recognise a Rieske domain in the interval 103-208 (WYPLYLTKNV…VRDSQGVLWV (106 aa)). 4 residues coordinate [2Fe-2S] cluster: cysteine 144, histidine 146, cysteine 163, and histidine 166. Residues histidine 257 and histidine 262 each contribute to the Fe cation site. The helical transmembrane segment at 493 to 513 (IWKNVLSGVVVALAALAILVS) threads the bilayer. At 514–518 (GRQWK) the chain is on the chloroplast intermembrane side. A helical transmembrane segment spans residues 519-539 (VLLLASASLCSVGVYACSTAI). Topologically, residues 540-553 (AMNTTNFIRVHRRL) are stromal.

As to quaternary structure, part of the Tic complex. Interacts with TIC62 and TIC110. [2Fe-2S] cluster serves as cofactor.

The protein localises to the plastid. It is found in the chloroplast inner membrane. Functionally, involved in protein precursor import into chloroplasts. Part of the redox regulon consisting of TIC32, TIC 55 and TIC62. The sequence is that of Protein TIC 55, chloroplastic (TIC55) from Pisum sativum (Garden pea).